A 137-amino-acid polypeptide reads, in one-letter code: uncharacterized protein (137 aa).

Residues 1 to 32 are disordered; it reads MRDHLPPGLPPDPFADDPCDPSAALDAVEPGQ.

This sequence to M.tuberculosis Rv3412.

This is an uncharacterized protein from Mycobacterium leprae (strain TN).